A 221-amino-acid polypeptide reads, in one-letter code: uncharacterized protein (221 aa).

This is an uncharacterized protein from Sinorhizobium fredii (strain NBRC 101917 / NGR234).